A 180-amino-acid chain; its full sequence is Putative peroxiredoxin YkuU (180 aa).

The Thioredoxin domain maps to 4–165 (RMVGKQAPRF…TLRVLQALQT (162 aa)). C52 acts as the Cysteine sulfenic acid (-SOH) intermediate in catalysis.

Belongs to the peroxiredoxin family. AhpC/Prx1 subfamily. In terms of assembly, homodimer; disulfide-linked, upon oxidation.

It is found in the cytoplasm. It catalyses the reaction a hydroperoxide + [protein]-dithiol = [protein]-disulfide + an alcohol + H2O. Thiol-specific peroxidase that catalyzes the reduction of hydrogen peroxide and organic hydroperoxides to water and alcohols, respectively. Plays a role in cell protection against oxidative stress by detoxifying peroxides. The chain is Putative peroxiredoxin YkuU (ykuU) from Bacillus subtilis (strain 168).